A 379-amino-acid polypeptide reads, in one-letter code: Chaperone protein DnaJ (379 aa).

The J domain maps to Asp5–Gly70. The CR-type zinc finger occupies Gly135–Glu213. Zn(2+) contacts are provided by Cys148, Cys151, Cys165, Cys168, Cys187, Cys190, Cys201, and Cys204. CXXCXGXG motif repeat units lie at residues Cys148–Gly155, Cys165–Gly172, Cys187–Gly194, and Cys201–Gly208.

The protein belongs to the DnaJ family. As to quaternary structure, homodimer. Zn(2+) serves as cofactor.

Its subcellular location is the cytoplasm. Its function is as follows. Participates actively in the response to hyperosmotic and heat shock by preventing the aggregation of stress-denatured proteins and by disaggregating proteins, also in an autonomous, DnaK-independent fashion. Unfolded proteins bind initially to DnaJ; upon interaction with the DnaJ-bound protein, DnaK hydrolyzes its bound ATP, resulting in the formation of a stable complex. GrpE releases ADP from DnaK; ATP binding to DnaK triggers the release of the substrate protein, thus completing the reaction cycle. Several rounds of ATP-dependent interactions between DnaJ, DnaK and GrpE are required for fully efficient folding. Also involved, together with DnaK and GrpE, in the DNA replication of plasmids through activation of initiation proteins. This chain is Chaperone protein DnaJ, found in Anaplasma marginale (strain Florida).